The primary structure comprises 486 residues: Cardiolipin synthase A (486 aa).

A run of 2 helical transmembrane segments spans residues threonine 3 to valine 23 and methionine 38 to phenylalanine 58. PLD phosphodiesterase domains lie at methionine 219–arginine 246 and glutamate 399–serine 426. Residues histidine 224, lysine 226, aspartate 231, histidine 404, lysine 406, and aspartate 411 contribute to the active site.

The protein belongs to the phospholipase D family. Cardiolipin synthase subfamily. ClsA sub-subfamily.

The protein resides in the cell inner membrane. It carries out the reaction 2 a 1,2-diacyl-sn-glycero-3-phospho-(1'-sn-glycerol) = a cardiolipin + glycerol. Its function is as follows. Catalyzes the reversible phosphatidyl group transfer from one phosphatidylglycerol molecule to another to form cardiolipin (CL) (diphosphatidylglycerol) and glycerol. The sequence is that of Cardiolipin synthase A from Klebsiella pneumoniae (strain 342).